Consider the following 231-residue polypeptide: Ribosyldihydronicotinamide dehydrogenase [quinone] (231 aa).

FAD contacts are provided by residues H12 and 18-21 (FNGS). Residue S80 is modified to Phosphoserine. Residue 104 to 107 (LYWF) participates in FAD binding. Substrate is bound at residue 127–129 (FDI). Residues 148 to 151 (TTGG) and Y156 contribute to the FAD site. Residues H174 and H178 each coordinate Zn(2+). An FAD-binding site is contributed by E194. Residue S197 is modified to Phosphoserine. R201 is an FAD binding site. A Zn(2+)-binding site is contributed by C223.

This sequence belongs to the NAD(P)H dehydrogenase (quinone) family. In terms of assembly, homodimer. It depends on Zn(2+) as a cofactor. FAD is required as a cofactor.

The protein localises to the cytoplasm. It catalyses the reaction 1-(beta-D-ribofuranosyl)-1,4-dihydronicotinamide + a quinone + H(+) = beta-nicotinamide D-riboside + a quinol. Functionally, the enzyme apparently serves as a quinone reductase in connection with conjugation reactions of hydroquinones involved in detoxification pathways as well as in biosynthetic processes such as the vitamin K-dependent gamma-carboxylation of glutamate residues in prothrombin synthesis. The polypeptide is Ribosyldihydronicotinamide dehydrogenase [quinone] (NQO2) (Pongo abelii (Sumatran orangutan)).